The chain runs to 155 residues: 6,7-dimethyl-8-ribityllumazine synthase (155 aa).

Residues F22, 56–58, and 80–82 contribute to the 5-amino-6-(D-ribitylamino)uracil site; these read AFE and AVI. A (2S)-2-hydroxy-3-oxobutyl phosphate-binding site is contributed by 85–86; sequence ST. The Proton donor role is filled by H88. Residue F113 participates in 5-amino-6-(D-ribitylamino)uracil binding. (2S)-2-hydroxy-3-oxobutyl phosphate is bound at residue R127.

Belongs to the DMRL synthase family.

It carries out the reaction (2S)-2-hydroxy-3-oxobutyl phosphate + 5-amino-6-(D-ribitylamino)uracil = 6,7-dimethyl-8-(1-D-ribityl)lumazine + phosphate + 2 H2O + H(+). It participates in cofactor biosynthesis; riboflavin biosynthesis; riboflavin from 2-hydroxy-3-oxobutyl phosphate and 5-amino-6-(D-ribitylamino)uracil: step 1/2. Functionally, catalyzes the formation of 6,7-dimethyl-8-ribityllumazine by condensation of 5-amino-6-(D-ribitylamino)uracil with 3,4-dihydroxy-2-butanone 4-phosphate. This is the penultimate step in the biosynthesis of riboflavin. In Caldicellulosiruptor bescii (strain ATCC BAA-1888 / DSM 6725 / KCTC 15123 / Z-1320) (Anaerocellum thermophilum), this protein is 6,7-dimethyl-8-ribityllumazine synthase.